A 346-amino-acid chain; its full sequence is Holliday junction branch migration complex subunit RuvB (346 aa).

Positions 1 to 11 (MTEQRTIASSA) are enriched in polar residues. A disordered region spans residues 1–20 (MTEQRTIASSATREDEAADA). Residues 1-183 (MTEQRTIASS…FGIVQRLEFY (183 aa)) form a large ATPase domain (RuvB-L) region. ATP contacts are provided by residues Ile22, Arg23, Gly64, Lys67, Thr68, Thr69, 130–132 (EDF), Arg173, Tyr183, and Arg220. Thr68 is a Mg(2+) binding site. Positions 184–254 (SPQELTRIVI…VAQAAMQMLK (71 aa)) are small ATPAse domain (RuvB-S). Residues 257-346 (PEGFDELDRR…PAIGEPGDLF (90 aa)) form a head domain (RuvB-H) region. The DNA site is built by Arg293, Arg312, and Arg317.

Belongs to the RuvB family. In terms of assembly, homohexamer. Forms an RuvA(8)-RuvB(12)-Holliday junction (HJ) complex. HJ DNA is sandwiched between 2 RuvA tetramers; dsDNA enters through RuvA and exits via RuvB. An RuvB hexamer assembles on each DNA strand where it exits the tetramer. Each RuvB hexamer is contacted by two RuvA subunits (via domain III) on 2 adjacent RuvB subunits; this complex drives branch migration. In the full resolvosome a probable DNA-RuvA(4)-RuvB(12)-RuvC(2) complex forms which resolves the HJ.

It localises to the cytoplasm. The catalysed reaction is ATP + H2O = ADP + phosphate + H(+). Functionally, the RuvA-RuvB-RuvC complex processes Holliday junction (HJ) DNA during genetic recombination and DNA repair, while the RuvA-RuvB complex plays an important role in the rescue of blocked DNA replication forks via replication fork reversal (RFR). RuvA specifically binds to HJ cruciform DNA, conferring on it an open structure. The RuvB hexamer acts as an ATP-dependent pump, pulling dsDNA into and through the RuvAB complex. RuvB forms 2 homohexamers on either side of HJ DNA bound by 1 or 2 RuvA tetramers; 4 subunits per hexamer contact DNA at a time. Coordinated motions by a converter formed by DNA-disengaged RuvB subunits stimulates ATP hydrolysis and nucleotide exchange. Immobilization of the converter enables RuvB to convert the ATP-contained energy into a lever motion, pulling 2 nucleotides of DNA out of the RuvA tetramer per ATP hydrolyzed, thus driving DNA branch migration. The RuvB motors rotate together with the DNA substrate, which together with the progressing nucleotide cycle form the mechanistic basis for DNA recombination by continuous HJ branch migration. Branch migration allows RuvC to scan DNA until it finds its consensus sequence, where it cleaves and resolves cruciform DNA. The sequence is that of Holliday junction branch migration complex subunit RuvB from Xanthomonas campestris pv. campestris (strain ATCC 33913 / DSM 3586 / NCPPB 528 / LMG 568 / P 25).